An 883-amino-acid polypeptide reads, in one-letter code: Glutamate receptor 2 (883 aa).

The first 24 residues, 1 to 24, serve as a signal peptide directing secretion; the sequence is MQKIMHISVLLSPILWGLIFGVSS. Over 25-543 the chain is Extracellular; sequence NSIQIGGLFP…GVFSFLDPLA (519 aa). The cysteines at positions 78 and 330 are disulfide-linked. 4 N-linked (GlcNAc...) asparagine glycosylation sites follow: Asn256, Asn370, Asn406, and Asn413. L-glutamate-binding residues include Pro499, Thr501, and Arg506. The helical transmembrane segment at 544-564 threads the bilayer; that stretch reads YEIWMCIVFAYIGVSVVLFLV. Residues 565 to 591 lie on the Cytoplasmic side of the membrane; the sequence is SRFSPYEWHTEEFEDGRETQSSESTNE. The helical; Pore-forming intramembrane region spans 592–607; sequence FGIFNSLWFSLGAFMR. The stretch at 608-610 is an intramembrane region; sequence QGC. Cys610 is lipidated: S-palmitoyl cysteine. The Cytoplasmic segment spans residues 611-616; sequence DISPRS. A helical transmembrane segment spans residues 617–637; sequence LSGRIVGGVWWFFTLIIISSY. Topologically, residues 638-812 are extracellular; sequence TANLAAFLTV…EKTSALSLSN (175 aa). Positions 675 and 676 each coordinate L-glutamate. Ser683 is subject to Phosphoserine; by PKC. Ser717 is subject to Phosphoserine; by PKG. Glu726 lines the L-glutamate pocket. The cysteines at positions 739 and 794 are disulfide-linked. The helical transmembrane segment at 813 to 833 threads the bilayer; that stretch reads VAGVFYILVGGLGLAMLVALI. Over 834–883 the chain is Cytoplasmic; it reads EFCYKSRAEAKRMKVAKNAQNINPSSSQNSQNFATYKEGYNVYGIESVKI. The S-palmitoyl cysteine moiety is linked to residue Cys836. Ser860 and Ser863 each carry phosphoserine. Residues 867 to 877 form a required for interaction with IQSEC1 region; that stretch reads ATYKEGYNVYG. Tyr876 bears the Phosphotyrosine mark. Phosphoserine is present on Ser880.

This sequence belongs to the glutamate-gated ion channel (TC 1.A.10.1) family. GRIA2 subfamily. Homotetramer or heterotetramer of pore-forming glutamate receptor subunits. Tetramers may be formed by the dimerization of dimers. May interact with MPP4. Forms a ternary complex with GRIP1 and CSPG4. Interacts with ATAD1 in an ATP-dependent manner. ATAD1-catalyzed ATP hydrolysis disrupts binding to ATAD1 and to GRIP1 and leads to AMPAR complex disassembly. Interacts with GRIP1 and GRIP2. Interacts with NSF via its C-terminus. Isoform 1, but not isoform 3, interacts with PICK1. Interacts with CACNG2. Interacts with GRIA1 and SYNDIG1. Part of a complex containing GRIA2, NSF and NAPA and/or NAPB. Interacts with SNX27 (via PDZ domain); the interaction is required for recycling to the plasma membrane when endocytosed and prevent degradation in lysosomes. Interacts with LRFN1. Found in a complex with GRIA1, GRIA3, GRIA4, CNIH2, CNIH3, CACNG2, CACNG3, CACNG4, CACNG5, CACNG7 and CACNG8. Interacts with CACNG5. Interacts with OLFM2. Interacts with AP4B1, AP4E1 and AP4M1; probably indirect it mediates the somatodendritic localization of GRIA2 in neurons. Forms a complex with GRIP1, NSG1 and STX12; controls the intracellular fate of AMPAR and the endosomal sorting of the GRIA2 subunit toward recycling and membrane targeting. Interacts with IQSEC1; the interaction is required for ARF6 activation. Interacts (heterotetramer form) with CNIH2 and CNIH3; this interaction promotes expression at the plasma membrane and extensively modulates their gating properties by slowing deactivation and desensitization kinetics. In terms of processing, phosphorylation at Tyr-876 is required for interaction with IQSEC1 and ARF6 activation, which in turn triggers AMPAR internalization for persistent synaptic depression. Post-translationally, palmitoylated. Depalmitoylated upon L-glutamate stimulation. ZDHHC3/GODZ specifically palmitoylates Cys-610, which leads to Golgi retention and decreased cell surface expression. In contrast, Cys-836 palmitoylation does not affect cell surface expression but regulates stimulation-dependent endocytosis. N-glycosylated. In terms of processing, ubiquitinated by RNF167, leading to its degradation.

The protein localises to the cell membrane. It is found in the postsynaptic cell membrane. It localises to the postsynaptic density membrane. The enzyme catalyses Ca(2+)(in) = Ca(2+)(out). It carries out the reaction Na(+)(in) = Na(+)(out). Its function is as follows. Ionotropic glutamate receptor that functions as a ligand-gated cation channel, gated by L-glutamate and glutamatergic agonists such as alpha-amino-3-hydroxy-5-methyl-4-isoxazolepropionic acid (AMPA), quisqualic acid, and kainic acid. L-glutamate acts as an excitatory neurotransmitter at many synapses in the central nervous system and plays an important role in fast excitatory synaptic transmission. Binding of the excitatory neurotransmitter L-glutamate induces a conformation change, leading to the opening of the cation channel, and thereby converts the chemical signal to an electrical impulse upon entry of monovalent and divalent cations such as sodium and calcium. The receptor then desensitizes rapidly and enters in a transient inactive state, characterized by the presence of bound agonist. In the presence of CACNG4 or CACNG7 or CACNG8, shows resensitization which is characterized by a delayed accumulation of current flux upon continued application of L-glutamate. Through complex formation with NSG1, GRIP1 and STX12 controls the intracellular fate of AMPAR and the endosomal sorting of the GRIA2 subunit toward recycling and membrane targeting. The polypeptide is Glutamate receptor 2 (Macaca fascicularis (Crab-eating macaque)).